Here is a 407-residue protein sequence, read N- to C-terminus: 4-hydroxy-3-methylbut-2-en-1-yl diphosphate synthase (ferredoxin) (407 aa).

Residues Cys312, Cys315, Cys346, and Glu353 each coordinate [4Fe-4S] cluster.

Belongs to the IspG family. [4Fe-4S] cluster serves as cofactor.

The enzyme catalyses (2E)-4-hydroxy-3-methylbut-2-enyl diphosphate + 2 oxidized [2Fe-2S]-[ferredoxin] + H2O = 2-C-methyl-D-erythritol 2,4-cyclic diphosphate + 2 reduced [2Fe-2S]-[ferredoxin] + H(+). The protein operates within isoprenoid biosynthesis; isopentenyl diphosphate biosynthesis via DXP pathway; isopentenyl diphosphate from 1-deoxy-D-xylulose 5-phosphate: step 5/6. Its function is as follows. Converts 2C-methyl-D-erythritol 2,4-cyclodiphosphate (ME-2,4cPP) into 1-hydroxy-2-methyl-2-(E)-butenyl 4-diphosphate. The protein is 4-hydroxy-3-methylbut-2-en-1-yl diphosphate synthase (ferredoxin) of Synechococcus elongatus (strain ATCC 33912 / PCC 7942 / FACHB-805) (Anacystis nidulans R2).